The chain runs to 399 residues: Protein LIGULELESS 1 (399 aa).

The interval 1–28 is disordered; the sequence is MMNLSAAANGRDEFPPYVVPSNAAAPPP. Residues 15 to 24 show a composition bias toward low complexity; sequence PPYVVPSNAA. The SBP-type zinc-finger motif lies at 182-260; the sequence is PPRCQAEGCK…ADHNRRRRKS (79 aa). Zn(2+) is bound by residues C185, C190, C207, H210, C227, C230, H234, and C246. Residues 243–259 carry the Bipartite nuclear localization signal motif; that stretch reads KKSCRKRLADHNRRRRK. The tract at residues 250–292 is disordered; it reads LADHNRRRRKSKPSDADAGDKKRAHANKAAAAKDKAESSSKNM. Over residues 261 to 270 the composition is skewed to basic and acidic residues; sequence KPSDADAGDK.

Leaf ligular region, blade and sheath.

The protein resides in the nucleus. In terms of biological role, involved in the formation of ligules and auricles during leaf organogenesis. The polypeptide is Protein LIGULELESS 1 (LG1) (Zea mays (Maize)).